Here is a 97-residue protein sequence, read N- to C-terminus: Co-chaperonin GroES (97 aa).

The protein belongs to the GroES chaperonin family. As to quaternary structure, heptamer of 7 subunits arranged in a ring. Interacts with the chaperonin GroEL.

It localises to the cytoplasm. Its function is as follows. Together with the chaperonin GroEL, plays an essential role in assisting protein folding. The GroEL-GroES system forms a nano-cage that allows encapsulation of the non-native substrate proteins and provides a physical environment optimized to promote and accelerate protein folding. GroES binds to the apical surface of the GroEL ring, thereby capping the opening of the GroEL channel. The chain is Co-chaperonin GroES from Sodalis glossinidius (strain morsitans).